An 852-amino-acid polypeptide reads, in one-letter code: Protein mono-ADP-ribosyltransferase PARP8 (852 aa).

Disordered stretches follow at residues 113-134 (NGEE…NDSE) and 289-310 (SPSY…EQDG). A compositionally biased stretch (acidic residues) spans 123-134 (VEEDSEGDNDSE). ADP-ribosylcysteine is present on residues Cys332, Cys366, Cys375, and Cys394. One can recognise a PARP catalytic domain in the interval 615–842 (EMTQAPYLEI…QEGGIHKEIL (228 aa)). The interval 748-775 (QKVSSKDEPASSSKSSNASQSQKKGQQS) is disordered. Low complexity predominate over residues 757–775 (ASSSKSSNASQSQKKGQQS).

It belongs to the ARTD/PARP family. Auto-mono-ADP-ribosylated.

The enzyme catalyses L-cysteinyl-[protein] + NAD(+) = S-(ADP-D-ribosyl)-L-cysteinyl-[protein] + nicotinamide + H(+). Functionally, mono-ADP-ribosyltransferase that mediates mono-ADP-ribosylation of target proteins. The polypeptide is Protein mono-ADP-ribosyltransferase PARP8 (Mus musculus (Mouse)).